We begin with the raw amino-acid sequence, 479 residues long: Cardiolipin synthase A (479 aa).

Transmembrane regions (helical) follow at residues 8 to 28 (FFGY…IHAL) and 38 to 58 (IAWA…YLVF). 2 consecutive PLD phosphodiesterase domains span residues 218–245 (INFR…GDEY) and 392–419 (EPGF…DNRS). Residues histidine 223, lysine 225, aspartate 230, histidine 397, lysine 399, and aspartate 404 contribute to the active site.

This sequence belongs to the phospholipase D family. Cardiolipin synthase subfamily. ClsA sub-subfamily.

The protein localises to the cell inner membrane. It catalyses the reaction 2 a 1,2-diacyl-sn-glycero-3-phospho-(1'-sn-glycerol) = a cardiolipin + glycerol. Functionally, catalyzes the reversible phosphatidyl group transfer from one phosphatidylglycerol molecule to another to form cardiolipin (CL) (diphosphatidylglycerol) and glycerol. This Pseudomonas syringae pv. syringae (strain B728a) protein is Cardiolipin synthase A.